The following is a 310-amino-acid chain: Adenylyl-sulfate kinase 4, chloroplastic (310 aa).

The N-terminal 75 residues, 1–75, are a transit peptide targeting the chloroplast; sequence MDVAAMARCV…MAKDESISSR (75 aa). 116 to 124 contributes to the ATP binding site; sequence GLSGSGKSS. Substrate is bound by residues aspartate 146, arginine 149, arginine 163, asparagine 166, 189–190, and glycine 239; that span reads IS. The Phosphoserine intermediate role is filled by serine 190.

The protein belongs to the APS kinase family. As to quaternary structure, homodimer; disulfide-linked. Expressed in root vasculature, root tips, leaf epidermal and guard cells, pollen grains and radicle of immature seeds.

It localises to the plastid. The protein resides in the chloroplast. It catalyses the reaction adenosine 5'-phosphosulfate + ATP = 3'-phosphoadenylyl sulfate + ADP + H(+). The protein operates within sulfur metabolism; hydrogen sulfide biosynthesis; sulfite from sulfate: step 2/3. Functionally, catalyzes the phosphorylation of adenosine 5'-phosphosulfate to 3'-phosphoadenylyl sulfate, which is the activated sulfate form for sulfation reactions. Essential for plant reproduction and viability. This is Adenylyl-sulfate kinase 4, chloroplastic (APK4) from Arabidopsis thaliana (Mouse-ear cress).